An 864-amino-acid polypeptide reads, in one-letter code: Alpha-glucosidase (864 aa).

An N-terminal signal peptide occupies residues 1-22; that stretch reads MAKVSFIFVAIALITGNVLCQT. N-linked (GlcNAc...) asparagine glycans are attached at residues asparagine 187, asparagine 364, and asparagine 406. Aspartate 430 (nucleophile) is an active-site residue. Residue glutamate 433 is part of the active site. Residues asparagine 466 and asparagine 500 are each glycosylated (N-linked (GlcNAc...) asparagine). Aspartate 567 (proton donor) is an active-site residue. 2 N-linked (GlcNAc...) asparagine glycosylation sites follow: asparagine 568 and asparagine 734.

The protein belongs to the glycosyl hydrolase 31 family.

The enzyme catalyses Hydrolysis of terminal, non-reducing (1-&gt;4)-linked alpha-D-glucose residues with release of alpha-D-glucose.. Its function is as follows. Hydrolyzes not only malto-oligosaccharides but also soluble starch. The sequence is that of Alpha-glucosidase from Mucor javanicus.